The following is a 449-amino-acid chain: Tubulin alpha chain (449 aa).

Residue Gln11 participates in GTP binding. The residue at position 40 (Lys40) is an N6-acetyllysine. GTP contacts are provided by Glu71, Ser140, Gly144, Thr145, Thr179, Asn206, and Asn228. Glu71 contacts Mg(2+). The active site involves Glu254.

The protein belongs to the tubulin family. Dimer of alpha and beta chains. A typical microtubule is a hollow water-filled tube with an outer diameter of 25 nm and an inner diameter of 15 nM. Alpha-beta heterodimers associate head-to-tail to form protofilaments running lengthwise along the microtubule wall with the beta-tubulin subunit facing the microtubule plus end conferring a structural polarity. Microtubules usually have 13 protofilaments but different protofilament numbers can be found in some organisms and specialized cells. Requires Mg(2+) as cofactor. Post-translationally, undergoes a tyrosination/detyrosination cycle, the cyclic removal and re-addition of a C-terminal tyrosine residue by the enzymes tubulin tyrosine carboxypeptidase (TTCP) and tubulin tyrosine ligase (TTL), respectively. Some glutamate residues at the C-terminus are either polyglutamylated or polyglycylated. These 2 modifications occur exclusively on glutamate residues and result in either polyglutamate or polyglycine chains on the gamma-carboxyl group. Both modifications can coexist on the same protein on adjacent residues, and lowering polyglycylation levels increases polyglutamylation, and reciprocally. The precise function of such modifications is still unclear but they regulate the assembly and dynamics of axonemal microtubules. In terms of processing, acetylation of alpha chains at Lys-40 stabilizes microtubules and affects affinity and processivity of microtubule motors. This modification has a role in multiple cellular functions, ranging from cell motility, cell cycle progression or cell differentiation to intracellular trafficking and signaling.

Its subcellular location is the cytoplasm. The protein resides in the cytoskeleton. The enzyme catalyses GTP + H2O = GDP + phosphate + H(+). Tubulin is the major constituent of microtubules, a cylinder consisting of laterally associated linear protofilaments composed of alpha- and beta-tubulin heterodimers. Microtubules grow by the addition of GTP-tubulin dimers to the microtubule end, where a stabilizing cap forms. Below the cap, tubulin dimers are in GDP-bound state, owing to GTPase activity of alpha-tubulin. In Tetrahymena thermophila, this protein is Tubulin alpha chain.